Consider the following 762-residue polypeptide: Primary amine oxidase, liver isozyme (762 aa).

Residues 1-16 (MFIFIFLSLWTLLVMG) form the signal peptide. The segment at 23 to 54 (GSEEGVGKQCHPSLPPRCPSRSPSDQPWTHPD) is disordered. A glycan (N-linked (GlcNAc...) asparagine) is linked at Asn136. Cysteines 197 and 198 form a disulfide. Asn231 is a glycosylation site (N-linked (GlcNAc...) asparagine). 383–393 (YMDSGFGMGYF) lines the substrate pocket. Asp385 functions as the Proton acceptor in the catalytic mechanism. Cysteines 403 and 429 form a disulfide. 467–472 (MLNYDY) is a substrate binding site. Tyr470 (schiff-base intermediate with substrate; via topaquinone) is an active-site residue. A 2',4',5'-topaquinone modification is found at Tyr470. Residues His519 and His521 each coordinate Cu cation. 6 residues coordinate Ca(2+): Asp528, Leu529, Asp530, Glu571, Phe662, and Asn664. Residue Asn665 is glycosylated (N-linked (GlcNAc...) asparagine). Ca(2+)-binding residues include Glu666, Asp672, and Leu673. Residue His683 participates in Cu cation binding. Residues Cys733 and Cys740 are joined by a disulfide bond.

This sequence belongs to the copper/topaquinone oxidase family. In terms of assembly, homodimer; disulfide-linked. Cu cation serves as cofactor. The cofactor is Ca(2+). Requires L-topaquinone as cofactor. Post-translationally, topaquinone (TPQ) is generated by copper-dependent autoxidation of a specific tyrosyl residue. Liver.

Its subcellular location is the secreted. It is found in the extracellular space. It carries out the reaction a primary methyl amine + O2 + H2O = an aldehyde + H2O2 + NH4(+). This chain is Primary amine oxidase, liver isozyme, found in Bos taurus (Bovine).